A 584-amino-acid polypeptide reads, in one-letter code: Adenine deaminase (584 aa).

This sequence belongs to the metallo-dependent hydrolases superfamily. Adenine deaminase family. Mn(2+) is required as a cofactor.

It carries out the reaction adenine + H2O + H(+) = hypoxanthine + NH4(+). This chain is Adenine deaminase, found in Methanococcoides burtonii (strain DSM 6242 / NBRC 107633 / OCM 468 / ACE-M).